Reading from the N-terminus, the 493-residue chain is Acetylcholine receptor subunit beta-type unc-29 (493 aa).

Positions 1 to 26 are cleaved as a signal peptide; it reads MRTNRLSWILVLSVVIFLVIINTINA. Residues N25 and N50 are each glycosylated (N-linked (GlcNAc...) asparagine). Over 27-232 the chain is Extracellular; it reads SDDEERLMVD…QVRIRRKTLF (206 aa). A disulfide bridge connects residues C155 and C169. 3 helical membrane passes run 233 to 254, 262 to 280, and 296 to 317; these read YTVV…VFFL, ITLT…LLVS, and YLLL…IINV. The Cytoplasmic portion of the chain corresponds to 318–445; sequence YFRGPRTHRM…WKYVAMIIDR (128 aa). The helical transmembrane segment at 446–466 threads the bilayer; the sequence is LLLYVFFGITVGGTCGILFSA.

This sequence belongs to the ligand-gated ion channel (TC 1.A.9) family. Acetylcholine receptor (TC 1.A.9.1) subfamily. As to quaternary structure, interacts with lev-1. Component of nicotinic acetylcholine receptor composed of 2 non-alpha subunits lev-1 and unc-29, and 3 alpha subunits unc-38, unc-63 and lev-8. Interacts with oig-4. Interacts with crld-1.

It localises to the postsynaptic cell membrane. It is found in the cell membrane. In terms of biological role, non-alpha subunit of nicotinic acetylcholine receptor (nAChR). Involved in nAChR sensitivity to nicotine and levasimole. The protein is Acetylcholine receptor subunit beta-type unc-29 of Caenorhabditis elegans.